The following is a 275-amino-acid chain: Beta-lactamase OXA-2 (275 aa).

A signal peptide spans 1–21 (MAIRIFAILFSIFSLATFAHA). Serine 72 (acyl-ester intermediate) is an active-site residue. Position 75 is an N6-carboxylysine (lysine 75). A substrate-binding site is contributed by 210-212 (KTG).

Belongs to the class-D beta-lactamase family.

It carries out the reaction a beta-lactam + H2O = a substituted beta-amino acid. In terms of biological role, this is an oxacillin-hydrolyzing beta-lactamase. This is Beta-lactamase OXA-2 (bla) from Escherichia coli.